The primary structure comprises 246 residues: tRNA (guanine-N(1)-)-methyltransferase (246 aa).

S-adenosyl-L-methionine-binding positions include Gly113 and 133 to 138 (IGDYVL).

Belongs to the RNA methyltransferase TrmD family. Homodimer.

It is found in the cytoplasm. The catalysed reaction is guanosine(37) in tRNA + S-adenosyl-L-methionine = N(1)-methylguanosine(37) in tRNA + S-adenosyl-L-homocysteine + H(+). Specifically methylates guanosine-37 in various tRNAs. The sequence is that of tRNA (guanine-N(1)-)-methyltransferase from Haemophilus influenzae (strain PittGG).